A 213-amino-acid chain; its full sequence is ATP synthase peripheral stalk subunit OSCP, mitochondrial (213 aa).

A mitochondrion-targeting transit peptide spans 1–23 (MAAPAVSGLSRQVRCFSTSVVRP). Positions 5 to 23 (AVSGLSRQVRCFSTSVVRP) match the SIFI-degron motif. Residues K54, K60, K70, and K73 each carry the N6-acetyllysine modification. K90 is subject to N6-succinyllysine. Residues K158 and K162 each carry the N6-acetyllysine; alternate modification. An N6-succinyllysine; alternate mark is found at K158 and K162. Residues K172, K176, and K192 each carry the N6-acetyllysine modification. K199 carries the N6-succinyllysine modification.

It belongs to the ATPase delta chain family. Component of the ATP synthase complex composed at least of ATP5F1A/subunit alpha, ATP5F1B/subunit beta, ATP5MC1/subunit c (homooctomer), MT-ATP6/subunit a, MT-ATP8/subunit 8, ATP5ME/subunit e, ATP5MF/subunit f, ATP5MG/subunit g, ATP5MK/subunit k, ATP5MJ/subunit j, ATP5F1C/subunit gamma, ATP5F1D/subunit delta, ATP5F1E/subunit epsilon, ATP5PF/subunit F6, ATP5PB/subunit b, ATP5PD/subunit d, ATP5PO/subunit OSCP. ATP synthase complex consists of a soluble F(1) head domain (subunits alpha(3) and beta(3)) - the catalytic core - and a membrane F(0) domain - the membrane proton channel (subunits c, a, 8, e, f, g, k and j). These two domains are linked by a central stalk (subunits gamma, delta, and epsilon) rotating inside the F1 region and a stationary peripheral stalk (subunits F6, b, d, and OSCP). In terms of processing, acetylation at Lys-162 decreases ATP production. Deacetylated by SIRT3. Post-translationally, in response to mitochondrial stress, the precursor protein is ubiquitinated by the SIFI complex in the cytoplasm before mitochondrial import, leading to its degradation. Within the SIFI complex, UBR4 initiates ubiquitin chain that are further elongated or branched by KCMF1.

Its subcellular location is the mitochondrion. The protein resides in the mitochondrion inner membrane. Functionally, subunit OSCP, of the mitochondrial membrane ATP synthase complex (F(1)F(0) ATP synthase or Complex V) that produces ATP from ADP in the presence of a proton gradient across the membrane which is generated by electron transport complexes of the respiratory chain. ATP synthase complex consist of a soluble F(1) head domain - the catalytic core - and a membrane F(1) domain - the membrane proton channel. These two domains are linked by a central stalk rotating inside the F(1) region and a stationary peripheral stalk. During catalysis, ATP synthesis in the catalytic domain of F(1) is coupled via a rotary mechanism of the central stalk subunits to proton translocation. In vivo, can only synthesize ATP although its ATP hydrolase activity can be activated artificially in vitro. Part of the complex F(0) domain. Part of the complex F(0) domain and the peripheric stalk, which acts as a stator to hold the catalytic alpha(3)beta(3) subcomplex and subunit a/ATP6 static relative to the rotary elements. The sequence is that of ATP synthase peripheral stalk subunit OSCP, mitochondrial from Homo sapiens (Human).